Consider the following 1150-residue polypeptide: BAI1-associated protein 3 (1150 aa).

The segment at 22–44 (RRKTEQEPEVTNSQEPPTGAWKP) is disordered. The C2 1 domain maps to 139 to 298 (SSEEHMEAIM…VKSARANGTA (160 aa)). 2 residues coordinate Ca(2+): D174 and D180. The segment at 193-214 (APQEPSGQKEQRFGFRKGSKRS) is disordered. Ca(2+) contacts are provided by D258 and D260. An MHD1 domain is found at 626–747 (FELYLTLADT…EASLFYTELL (122 aa)). In terms of domain architecture, MHD2 spans 851–959 (DEAVAPLLKY…CSTRECIEQF (109 aa)). One can recognise a C2 2 domain in the interval 973–1099 (RFGRLTVRCH…GIARPHVGGG (127 aa)). Ca(2+) contacts are provided by L1003, D1004, D1010, D1068, D1070, S1073, and D1076.

Belongs to the unc-13 family. In terms of assembly, interacts with ADGRB1, this interaction is direct. Interacts with endosomal SNARE proteins VAMP3, VAMP4, STX6 and STX16; this interaction is increased in the presence of calcium. Requires Ca(2+) as cofactor. As to expression, prominently expressed in brain structures including hypothalamus, amygdala, stria terminalis and periaqueductal gray (at protein level). Expressed in nonneuronal tissues, including placenta, lung, pancreas, spleen, and testes. Within placenta, expression is restricted to the syncytiotrophoblasts.

The protein localises to the cytoplasm. The protein resides in the cytosol. It localises to the recycling endosome membrane. Its subcellular location is the late endosome membrane. It is found in the golgi apparatus. The protein localises to the trans-Golgi network membrane. The protein resides in the cell membrane. Its function is as follows. Functions in endosome to Golgi retrograde transport. In response to calcium influx, may interact with SNARE fusion receptors and membrane phospholipids to mediate endosome fusion with the trans-Golgi network. By promoting the recycling of secretory vesicle transmembrane proteins, it indirectly controls dense-core secretory vesicle biogenesis, maturation and their ability to mediate the constitutive and regulated secretion of neurotransmitters and hormones. May regulate behavior and food intake by controlling calcium-stimulated exocytosis of neurotransmitters including NPY and serotonin and hormones like insulin. Proposed to play a role in hypothalamic neuronal firing by modulating gamma-aminobutyric acid (GABA)ergic inhibitory neurotransmission. This chain is BAI1-associated protein 3, found in Mus musculus (Mouse).